A 310-amino-acid chain; its full sequence is TLC domain-containing protein 2 (310 aa).

6 consecutive transmembrane segments (helical) span residues L6 to L26, N40 to W60, V79 to Q99, C117 to L137, A167 to L187, and L194 to I214. Residues R33–Q227 enclose the TLC domain.

This sequence belongs to the TLCD family.

It localises to the cell membrane. Its function is as follows. Regulates the composition and fluidity of the plasma membrane. Inhibits the incorporation of membrane-fluidizing phospholipids containing omega-3 long-chain polyunsaturated fatty acids (LCPUFA) and thereby promotes membrane rigidity. Does not appear to have any effect on LCPUFA synthesis. The sequence is that of TLC domain-containing protein 2 (Tlcd2) from Mus musculus (Mouse).